The sequence spans 432 residues: Alkaline protease secretion protein AprE (432 aa).

Topologically, residues M1–R14 are cytoplasmic. Residues L15–L36 traverse the membrane as a helical segment. Topologically, residues D37–N432 are periplasmic.

It belongs to the membrane fusion protein (MFP) (TC 8.A.1) family.

It is found in the cell inner membrane. In terms of biological role, involved in the secretion of alkaline protease. This chain is Alkaline protease secretion protein AprE (aprE), found in Pseudomonas aeruginosa (strain ATCC 15692 / DSM 22644 / CIP 104116 / JCM 14847 / LMG 12228 / 1C / PRS 101 / PAO1).